A 216-amino-acid chain; its full sequence is Acetate CoA-transferase subunit beta (216 aa).

Glutamate 46 is an active-site residue.

Belongs to the 3-oxoacid CoA-transferase subunit B family. As to quaternary structure, heterotetramer composed of two alpha subunits (AtoD) and two beta subunits (AtoA).

The protein resides in the cytoplasm. It catalyses the reaction an acyl-CoA + acetate = a carboxylate + acetyl-CoA. The catalysed reaction is acetoacetate + acetyl-CoA = acetoacetyl-CoA + acetate. It carries out the reaction butanoate + acetyl-CoA = butanoyl-CoA + acetate. The enzyme catalyses acetoacetate + butanoyl-CoA = acetoacetyl-CoA + butanoate. Its pathway is lipid metabolism; short-chain fatty acid metabolism. With respect to regulation, inhibited by p-chloromercuribenzoate. In terms of biological role, coenzyme A transferase which is involved in short-chain fatty acid degradation and catalyzes the activation of short-chain fatty acids to their respective CoA thiolesters. During acetoacetate degradation, catalyzes the transfer of CoA from acetyl-CoA to acetoacetate by a mechanism involving a covalent enzyme-CoA compound as a reaction intermediate. Utilizes a variety of short chain acyl-CoA and carboxylic acid substrates but exhibits maximal activity with normal and 3-keto substrates. This Escherichia coli (strain K12) protein is Acetate CoA-transferase subunit beta.